The sequence spans 815 residues: (-)-kolavenyl diphosphate synthase TPS28, chloroplastic (815 aa).

The N-terminal 51 residues, 1–51 (MFMSSSSSSHARRPQLSSFSYLHPPLPFPGLSFFNTRDKRVNFDSTRIICI), are a transit peptide targeting the chloroplast. K247 contacts substrate. Mg(2+) is bound by residues D379 and D381. The short motif at 379-382 (DIDD) is the DXDD motif element. Residue K465 coordinates substrate.

Belongs to the terpene synthase family. Tpsc subfamily. It depends on Mg(2+) as a cofactor.

Its subcellular location is the plastid. It is found in the chloroplast. The catalysed reaction is (2E,6E,10E)-geranylgeranyl diphosphate = (-)-kolavenyl diphosphate. Inhibited by high concentrations of magnesium. Diterpene synthase that catalyzes the formation of (-)-kolavenyl diphosphate from geranylgeranyl diphosphate (GGPP). This Tripterygium wilfordii (Thunder God vine) protein is (-)-kolavenyl diphosphate synthase TPS28, chloroplastic.